We begin with the raw amino-acid sequence, 684 residues long: Phenoloxidase 2 (684 aa).

Residues 1-50 constitute a propeptide that is removed on maturation; that stretch reads MADKKNLLLLFDHPTEPVFMDKGKRVTVFDVPDSFLTDRYRPISNEVQSR. Cu cation contacts are provided by histidine 208, histidine 212, and histidine 238. The Proton acceptor role is filled by glutamate 350. Residues histidine 365, histidine 369, and histidine 405 each coordinate Cu cation. N-linked (GlcNAc...) asparagine glycosylation is found at asparagine 448 and asparagine 492. 2 disulfides stabilise this stretch: cysteine 581–cysteine 623 and cysteine 583–cysteine 630. N-linked (GlcNAc...) asparagine glycans are attached at residues asparagine 665 and asparagine 677.

Belongs to the tyrosinase family. It depends on Cu(2+) as a cofactor. Upon activation, a trypsin type protease cleaves prophenol oxidase to yield the active enzyme.

The protein localises to the secreted. It carries out the reaction 2 L-dopa + O2 = 2 L-dopaquinone + 2 H2O. The catalysed reaction is L-tyrosine + O2 = L-dopaquinone + H2O. Functionally, this is a copper-containing oxidase that functions in the formation of pigments such as melanins and other polyphenolic compounds. Catalyzes the rate-limiting conversions of tyrosine to DOPA, DOPA to DOPA-quinone and possibly 5,6 dihydroxyindole to indole-5'6 quinonee. This chain is Phenoloxidase 2 (PPO2), found in Drosophila melanogaster (Fruit fly).